Here is a 375-residue protein sequence, read N- to C-terminus: uncharacterized protein (375 aa).

It belongs to the mimivirus L17x/L18x family.

This is an uncharacterized protein from Acanthamoeba polyphaga (Amoeba).